The primary structure comprises 169 residues: Protein-export protein SecB (169 aa).

It belongs to the SecB family. As to quaternary structure, homotetramer, a dimer of dimers. One homotetramer interacts with 1 SecA dimer.

The protein resides in the cytoplasm. In terms of biological role, one of the proteins required for the normal export of preproteins out of the cell cytoplasm. It is a molecular chaperone that binds to a subset of precursor proteins, maintaining them in a translocation-competent state. It also specifically binds to its receptor SecA. This Haemophilus influenzae (strain PittEE) protein is Protein-export protein SecB.